The primary structure comprises 82 residues: Zinc finger CCCH domain-containing protein 13 (82 aa).

2 C3H1-type zinc fingers span residues Arg-9–Asn-37 and Arg-55–Thr-82.

This is Zinc finger CCCH domain-containing protein 13 from Arabidopsis thaliana (Mouse-ear cress).